The sequence spans 598 residues: EF-hand and coiled-coil domain-containing protein 1 (598 aa).

The tract at residues 1 to 22 (MEPVSTGAEAGMEGAGGDPYRR) is disordered. The region spanning 54–89 (GLDQYLQEVFHHLDCRGAGRLPRADFRALCAVLGLR) is the EF-hand domain. Disordered stretches follow at residues 96–127 (AGQA…DTDE), 175–198 (RLRR…PDCE), and 326–411 (YRSE…KKTP). The segment covering 175–185 (RLRRPRRRRRP) has biased composition (basic residues). Residues 196–303 (DCERVARLEE…RSLHRVRELE (108 aa)) adopt a coiled-coil conformation. A compositionally biased stretch (basic and acidic residues) spans 343 to 359 (PGDKSNEPEDAGTRDPD). The span at 394 to 404 (SDEEEVEEERW) shows a compositional bias: acidic residues. Positions 479-533 (TSEEEAELQQKVEENEHLRLELQMVETERVRLSLLEEKLVDVLQLLQRLRDLNIS) form a coiled coil.

This Homo sapiens (Human) protein is EF-hand and coiled-coil domain-containing protein 1 (EFCC1).